We begin with the raw amino-acid sequence, 450 residues long: Molybdate-anion transporter (450 aa).

12 helical membrane-spanning segments follow: residues 1–21 (MLVTAYLAFVGLLASCLGLEL), 43–63 (LDFYQVYFLALAADWLQAPYL), 79–99 (ILYVCGLASTVLFGLVASSLV), 128–148 (FVLLVGRALGGLSTALLFSAF), 174–194 (AAFWNHVLAVVAGVAAEAVAS), 195–215 (WIGLGPVAPFVAAIPLLALAG), 249–269 (VLLLGTIQALFESVIFIFVFL), 278–298 (GAPLGIVFSSFMAASLLGSSL), 311–331 (PMHLLSLAVLIVVFSLFMLTF), 344–364 (FIAFLLIELACGLYFPSMSFL), 376–396 (GVLNWFRVPLHLLACLGLLVL), and 409–429 (FSICSAVMVMALLAVVGLFTV).

This sequence belongs to the major facilitator superfamily.

Its subcellular location is the cell membrane. Its function is as follows. Mediates high-affinity intracellular uptake of the rare oligo-element molybdenum. This Pongo abelii (Sumatran orangutan) protein is Molybdate-anion transporter (MFSD5).